The primary structure comprises 430 residues: Putative O-antigen transporter (430 aa).

12 consecutive transmembrane segments (helical) span residues 23–39 (IIIA…LISM), 45–61 (YAIF…CSAV), 96–112 (IAII…SGVI), 131–147 (LFFT…IGAI), 163–179 (LLNA…LLYI), 192–208 (LIVL…CYIV), 236–252 (LFTL…YMVI), 266–282 (VTMK…TAIL), 309–325 (ILLG…FIYL), 342–358 (VSIL…CIRV), 373–389 (LKIL…IGGI), and 400–416 (ISGV…LTVF).

It is found in the cell inner membrane. It functions in the pathway bacterial outer membrane biogenesis; LPS O-antigen biosynthesis. Functionally, may be involved in the translocation process of the nascent O-polysaccharide molecules and/or its ligation to lipid A core units. The polypeptide is Putative O-antigen transporter (rfbX) (Salmonella typhimurium (strain LT2 / SGSC1412 / ATCC 700720)).